Reading from the N-terminus, the 369-residue chain is DNA replication and repair protein RecF (369 aa).

30 to 37 is an ATP binding site; the sequence is GQNAQGKT.

Belongs to the RecF family.

It is found in the cytoplasm. In terms of biological role, the RecF protein is involved in DNA metabolism; it is required for DNA replication and normal SOS inducibility. RecF binds preferentially to single-stranded, linear DNA. It also seems to bind ATP. This is DNA replication and repair protein RecF from Acetivibrio thermocellus (strain ATCC 27405 / DSM 1237 / JCM 9322 / NBRC 103400 / NCIMB 10682 / NRRL B-4536 / VPI 7372) (Clostridium thermocellum).